Consider the following 157-residue polypeptide: Sorting nexin-3 (157 aa).

The segment at 1–21 is disordered; it reads MSKPFQPISDVINTSPKNKSQ. The span at 11–21 shows a compositional bias: polar residues; sequence VINTSPKNKSQ. The PX domain occupies 32–152; it reads NFLEIEVKNP…EFIQNEKWDP (121 aa). R75, S77, K101, and R117 together coordinate a 1,2-diacyl-sn-glycero-3-phospho-(1D-myo-inositol-3-phosphate).

This sequence belongs to the sorting nexin family.

The protein localises to the cytoplasm. The protein resides in the golgi apparatus membrane. It localises to the prevacuolar compartment membrane. Required for retention of late Golgi membrane proteins. Component of the retrieval machinery that functions by direct interaction with the cytosolic tails of certain TGN membrane proteins during the sorting/budding process at the prevacuolar compartment. Binds phosphatidylinositol 3-phosphate (PtdIns(P3)). The polypeptide is Sorting nexin-3 (SNX3) (Candida albicans (strain SC5314 / ATCC MYA-2876) (Yeast)).